Consider the following 185-residue polypeptide: Probable chorismate pyruvate-lyase 1 (185 aa).

Arginine 68, leucine 106, and glutamate 164 together coordinate substrate.

Belongs to the UbiC family.

The protein resides in the cytoplasm. It catalyses the reaction chorismate = 4-hydroxybenzoate + pyruvate. It functions in the pathway cofactor biosynthesis; ubiquinone biosynthesis. In terms of biological role, removes the pyruvyl group from chorismate, with concomitant aromatization of the ring, to provide 4-hydroxybenzoate (4HB) for the ubiquinone pathway. The sequence is that of Probable chorismate pyruvate-lyase 1 from Pseudomonas entomophila (strain L48).